Reading from the N-terminus, the 152-residue chain is Transcriptional regulator MraZ (152 aa).

SpoVT-AbrB domains are found at residues 5-52 (ASAI…PIHE) and 81-124 (AHEV…DEQA).

The protein belongs to the MraZ family. As to quaternary structure, forms oligomers.

It localises to the cytoplasm. The protein localises to the nucleoid. This Shewanella oneidensis (strain ATCC 700550 / JCM 31522 / CIP 106686 / LMG 19005 / NCIMB 14063 / MR-1) protein is Transcriptional regulator MraZ.